Consider the following 239-residue polypeptide: MTAPLSLFVTGTDTEIGKTFVSAALLHGFARHGLRAAALKPVAAGAYERDGVWRNEDADQLDAAANVVLPPELRTPFLLKAPAAPHIVAAQEGVTLDIDTIVACHREALTRADVVVVEGAGGFRVPMNDTQDLADLAVALGVPVVLVVGVRLGCINHALLTADAIAARGLKLAGWVANHVDPAMSFPDENIATMRDWLAREHGAPLLGRIPHMSPAAPESAAAMLDIAALVETLRTAQP.

An ATP-binding site is contributed by Glu15–Phe20. Position 19 (Thr19) interacts with Mg(2+). Lys40 is a catalytic residue. ATP contacts are provided by residues Asp57, Glu118 to Gly121, and Asn178 to His179. Residues Asp57 and Glu118 each coordinate Mg(2+).

The protein belongs to the dethiobiotin synthetase family. Homodimer. Requires Mg(2+) as cofactor.

The protein localises to the cytoplasm. It catalyses the reaction (7R,8S)-7,8-diammoniononanoate + CO2 + ATP = (4R,5S)-dethiobiotin + ADP + phosphate + 3 H(+). It functions in the pathway cofactor biosynthesis; biotin biosynthesis; biotin from 7,8-diaminononanoate: step 1/2. In terms of biological role, catalyzes a mechanistically unusual reaction, the ATP-dependent insertion of CO2 between the N7 and N8 nitrogen atoms of 7,8-diaminopelargonic acid (DAPA, also called 7,8-diammoniononanoate) to form a ureido ring. This Burkholderia lata (strain ATCC 17760 / DSM 23089 / LMG 22485 / NCIMB 9086 / R18194 / 383) protein is ATP-dependent dethiobiotin synthetase BioD.